The chain runs to 741 residues: Catalase-peroxidase (741 aa).

Positions 1–23 are cleaved as a signal peptide; the sequence is MLKKIITALGMSGMLLASSNAIA. Positions 102-223 form a cross-link, tryptophyl-tyrosyl-methioninium (Trp-Tyr) (with M-249); the sequence is WHDAGTYRIY…YAATQMGLIY (122 aa). The active-site Proton acceptor is the histidine 103. The segment at residues 223–249 is a cross-link (tryptophyl-tyrosyl-methioninium (Tyr-Met) (with W-102)); it reads YVNPEGPDGKPDIKGAASEIRQAFRAM. Position 264 (histidine 264) interacts with heme b.

The protein belongs to the peroxidase family. Peroxidase/catalase subfamily. In terms of assembly, homodimer or homotetramer. It depends on heme b as a cofactor. Formation of the three residue Trp-Tyr-Met cross-link is important for the catalase, but not the peroxidase activity of the enzyme.

The catalysed reaction is H2O2 + AH2 = A + 2 H2O. The enzyme catalyses 2 H2O2 = O2 + 2 H2O. In terms of biological role, bifunctional enzyme with both catalase and broad-spectrum peroxidase activity. This is Catalase-peroxidase from Francisella tularensis subsp. holarctica (strain FTNF002-00 / FTA).